We begin with the raw amino-acid sequence, 392 residues long: 2-oxoisovalerate dehydrogenase subunit beta, mitochondrial (392 aa).

The N-terminal 50 residues, 1 to 50, are a transit peptide targeting the mitochondrion; that stretch reads MAAVAAFAGWLLRLRAAGADGPWRRLCGAGLSRGFLQSASAYGAAAQRRQ. Tyr152 is a thiamine diphosphate binding site. 5 residues coordinate K(+): Gly178, Leu180, Thr181, Cys228, and Asp231. At Lys232 the chain carries N6-acetyllysine. K(+) is bound at residue Asn233. An N6-acetyllysine modification is found at Lys241.

Heterotetramer of 2 alpha/BCKDHA and 2 beta chains/BCKDHB that forms the branched-chain alpha-keto acid decarboxylase (E1) component of the BCKD complex. The branched-chain alpha-ketoacid dehydrogenase is a large complex composed of three major building blocks E1, E2 and E3. It is organized around E2, a 24-meric cubic core composed of DBT, to which are associated 6 to 12 copies of E1, and approximately 6 copies of the dehydrogenase E3, a DLD dimer. Thiamine diphosphate is required as a cofactor.

Its subcellular location is the mitochondrion matrix. The enzyme catalyses N(6)-[(R)-lipoyl]-L-lysyl-[protein] + 3-methyl-2-oxobutanoate + H(+) = N(6)-[(R)-S(8)-2-methylpropanoyldihydrolipoyl]-L-lysyl-[protein] + CO2. Its function is as follows. Together with BCKDHA forms the heterotetrameric E1 subunit of the mitochondrial branched-chain alpha-ketoacid dehydrogenase (BCKD) complex. The BCKD complex catalyzes the multi-step oxidative decarboxylation of alpha-ketoacids derived from the branched-chain amino-acids valine, leucine and isoleucine producing CO2 and acyl-CoA which is subsequently utilized to produce energy. The E1 subunit catalyzes the first step with the decarboxylation of the alpha-ketoacid forming an enzyme-product intermediate. A reductive acylation mediated by the lipoylamide cofactor of E2 extracts the acyl group from the E1 active site for the next step of the reaction. This Bos taurus (Bovine) protein is 2-oxoisovalerate dehydrogenase subunit beta, mitochondrial (BCKDHB).